The chain runs to 912 residues: Translation initiation factor IF-2 (912 aa).

The segment at 26–297 (SDQGEFVKSA…RGRKSKRAKR (272 aa)) is disordered. Residues 56–74 (KPAPAASNGAAAEAAAPPK) show a composition bias toward low complexity. Residues 100–120 (APEPPAAPAAPAAPAPKPSPA) show a composition bias toward pro residues. The span at 121–131 (ARPAAAEAAAP) shows a compositional bias: low complexity. Pro residues-rich tracts occupy residues 132 to 152 (APAP…PGAP), 173 to 183 (PRPQAPRPGAP), and 192 to 218 (NMPP…PGGG). The segment covering 219–283 (PRPGGAGRPG…GAAGAFGRPG (65 aa)) has biased composition (gly residues). Positions 287-296 (KRGRKSKRAK) are enriched in basic residues. One can recognise a tr-type G domain in the interval 408-579 (TRPPVVTVMG…AVLLTADAAL (172 aa)). Residues 417–424 (GHVDHGKT) form a G1 region. A GTP-binding site is contributed by 417–424 (GHVDHGKT). Residues 442-446 (GITQH) form a G2 region. The segment at 467–470 (DTPG) is G3. GTP is bound by residues 467-471 (DTPGH) and 521-524 (NKID). A G4 region spans residues 521–524 (NKID). A G5 region spans residues 557-559 (SAR).

The protein belongs to the TRAFAC class translation factor GTPase superfamily. Classic translation factor GTPase family. IF-2 subfamily.

It is found in the cytoplasm. Functionally, one of the essential components for the initiation of protein synthesis. Protects formylmethionyl-tRNA from spontaneous hydrolysis and promotes its binding to the 30S ribosomal subunits. Also involved in the hydrolysis of GTP during the formation of the 70S ribosomal complex. In Mycobacteroides abscessus (strain ATCC 19977 / DSM 44196 / CCUG 20993 / CIP 104536 / JCM 13569 / NCTC 13031 / TMC 1543 / L948) (Mycobacterium abscessus), this protein is Translation initiation factor IF-2.